Consider the following 544-residue polypeptide: Probable protein kinase UbiB (544 aa).

The chain crosses the membrane as a helical span at residues 1–21 (MIFGELRRLYLIIGVMLSYGL). In terms of domain architecture, Protein kinase spans 123–500 (DFQQEPLASA…HVRQSQSRFL (378 aa)). Residues 129 to 137 (LASASIAQV) and Lys-151 contribute to the ATP site. Asp-286 acts as the Proton acceptor in catalysis. The next 2 helical transmembrane spans lie at 499–519 (FLFG…TQGA) and 520–540 (DEGS…IIGW).

This sequence belongs to the ABC1 family. UbiB subfamily.

The protein localises to the cell inner membrane. Its pathway is cofactor biosynthesis; ubiquinone biosynthesis [regulation]. Is probably a protein kinase regulator of UbiI activity which is involved in aerobic coenzyme Q (ubiquinone) biosynthesis. This Sodalis glossinidius (strain morsitans) protein is Probable protein kinase UbiB.